The sequence spans 316 residues: HPr kinase/phosphorylase (316 aa).

Residues histidine 143 and lysine 164 contribute to the active site. 158–165 (GEAGSGKS) provides a ligand contact to ATP. Position 165 (serine 165) interacts with Mg(2+). Aspartate 182 (proton acceptor; for phosphorylation activity. Proton donor; for dephosphorylation activity) is an active-site residue. The segment at 206-215 (LEVRGLGVLN) is important for the catalytic mechanism of both phosphorylation and dephosphorylation. A Mg(2+)-binding site is contributed by glutamate 207. Residue arginine 251 is part of the active site. The segment at 272 to 277 (PVMPGR) is important for the catalytic mechanism of dephosphorylation.

Belongs to the HPrK/P family. As to quaternary structure, homohexamer. The cofactor is Mg(2+).

The catalysed reaction is [HPr protein]-L-serine + ATP = [HPr protein]-O-phospho-L-serine + ADP + H(+). It catalyses the reaction [HPr protein]-O-phospho-L-serine + phosphate + H(+) = [HPr protein]-L-serine + diphosphate. Functionally, catalyzes the ATP- as well as the pyrophosphate-dependent phosphorylation of a specific serine residue in HPr, a phosphocarrier protein of the phosphoenolpyruvate-dependent sugar phosphotransferase system (PTS). HprK/P also catalyzes the pyrophosphate-producing, inorganic phosphate-dependent dephosphorylation (phosphorolysis) of seryl-phosphorylated HPr (P-Ser-HPr). In Xanthomonas axonopodis pv. citri (strain 306), this protein is HPr kinase/phosphorylase.